A 460-amino-acid chain; its full sequence is Cysteine--tRNA ligase (460 aa).

C28 contacts Zn(2+). Residues 30–40 (VTIYDLCHIGH) carry the 'HIGH' region motif. Residues C209, H234, and E238 each contribute to the Zn(2+) site. A 'KMSKS' region motif is present at residues 266-270 (KMSKS). K269 provides a ligand contact to ATP.

It belongs to the class-I aminoacyl-tRNA synthetase family. As to quaternary structure, monomer. It depends on Zn(2+) as a cofactor.

Its subcellular location is the cytoplasm. The catalysed reaction is tRNA(Cys) + L-cysteine + ATP = L-cysteinyl-tRNA(Cys) + AMP + diphosphate. The polypeptide is Cysteine--tRNA ligase (Vibrio vulnificus (strain YJ016)).